Here is a 541-residue protein sequence, read N- to C-terminus: Membrane protein insertase YidC (541 aa).

The chain crosses the membrane as a helical span at residues 6 to 26 (SLLVLALIFISFLVYQQWQLD). The segment at 34–56 (EQTTSITATSDVPASSPSNSQAI) is disordered. 4 consecutive transmembrane segments (helical) span residues 337–357 (FWLL…IICV), 416–436 (LGGC…YWTF), 454–474 (LSAQ…MFLL), and 495–515 (PLVF…YWLV).

It belongs to the OXA1/ALB3/YidC family. Type 1 subfamily. In terms of assembly, interacts with the Sec translocase complex via SecD. Specifically interacts with transmembrane segments of nascent integral membrane proteins during membrane integration.

It is found in the cell inner membrane. In terms of biological role, required for the insertion and/or proper folding and/or complex formation of integral membrane proteins into the membrane. Involved in integration of membrane proteins that insert both dependently and independently of the Sec translocase complex, as well as at least some lipoproteins. Aids folding of multispanning membrane proteins. This Haemophilus influenzae (strain ATCC 51907 / DSM 11121 / KW20 / Rd) protein is Membrane protein insertase YidC.